Reading from the N-terminus, the 67-residue chain is Small ribosomal subunit protein bS21 (67 aa).

It belongs to the bacterial ribosomal protein bS21 family.

The protein is Small ribosomal subunit protein bS21 of Acidiphilium cryptum (strain JF-5).